Consider the following 211-residue polypeptide: Transcription antitermination protein NusB (211 aa).

Belongs to the NusB family.

Its function is as follows. Involved in transcription antitermination. Required for transcription of ribosomal RNA (rRNA) genes. Binds specifically to the boxA antiterminator sequence of the ribosomal RNA (rrn) operons. This chain is Transcription antitermination protein NusB, found in Trichormus variabilis (strain ATCC 29413 / PCC 7937) (Anabaena variabilis).